The sequence spans 268 residues: Thiazole synthase (268 aa).

The Schiff-base intermediate with DXP role is filled by lysine 96. Residues glycine 157, 185–186 (AG), and 207–208 (NT) each bind 1-deoxy-D-xylulose 5-phosphate. The segment at 238-268 (PMRPREAASPSSPVEGVPFTPTGPRPGRGPQ) is disordered. Pro residues predominate over residues 258-268 (PTGPRPGRGPQ).

This sequence belongs to the ThiG family. As to quaternary structure, homotetramer. Forms heterodimers with either ThiH or ThiS.

Its subcellular location is the cytoplasm. It carries out the reaction [ThiS sulfur-carrier protein]-C-terminal-Gly-aminoethanethioate + 2-iminoacetate + 1-deoxy-D-xylulose 5-phosphate = [ThiS sulfur-carrier protein]-C-terminal Gly-Gly + 2-[(2R,5Z)-2-carboxy-4-methylthiazol-5(2H)-ylidene]ethyl phosphate + 2 H2O + H(+). Its pathway is cofactor biosynthesis; thiamine diphosphate biosynthesis. Its function is as follows. Catalyzes the rearrangement of 1-deoxy-D-xylulose 5-phosphate (DXP) to produce the thiazole phosphate moiety of thiamine. Sulfur is provided by the thiocarboxylate moiety of the carrier protein ThiS. In vitro, sulfur can be provided by H(2)S. This Thermus thermophilus (strain ATCC 27634 / DSM 579 / HB8) protein is Thiazole synthase.